We begin with the raw amino-acid sequence, 134 residues long: DFHCLPGWSAYDQYCYRVFNEPKNWEDAERFCAKQADSGHLVSIETMGEADFVAQLISENIQSEKHYVWIGLKVQNKEQQCSSEWSDGSSVTYENLIKLYMRKCGALEQESGFRKWINLGCIQLNPFVCKFPPQ.

Residues 1-134 enclose the C-type lectin domain; sequence DFHCLPGWSA…NPFVCKFPPQ (134 aa). Cystine bridges form between cysteine 4-cysteine 15, cysteine 32-cysteine 129, and cysteine 104-cysteine 121.

It belongs to the snaclec family. In terms of assembly, heterotetramer of the subunits alpha, alpha', beta and beta'; disulfide-linked. Expressed by the venom gland.

The protein localises to the secreted. Its function is as follows. Potent platelet activator that aggregates platelets via both GPIbalpha (GP1BA) and GPVI (GP6). Induces a tyrosine phosphorylation profile in platelets that resembles this produced by collagen, involving the time dependent tyrosine phosphorylation of Fc receptor gamma chain (FCGR1A), phospholipase Cgamma2 (PLCG2), and LAT. The polypeptide is Snaclec alboaggregin-A subunit alpha' (Trimeresurus albolabris (White-lipped pit viper)).